A 559-amino-acid chain; its full sequence is MSFDHRKYRPVAVIDKPDRRWPNQRIEKAPLWAAVDLRDGNQALIKPMSVAQKRRFFQMLVELGFKEIEVGFPSASQIDFDFCRALIEEDLVPDDVHIQVLTQAREDLIARTFDSLKGAKNAIVHIYNATSPTFREQVFNVDKAGCKAIAVRAAEWVKENAAKQPDTHWSFQYSPETFSATETDFAIEVIDAVNAVWRPDQGQRVIINLPATVEVSTPNVFADQVEMVHDNIQYRDDVIISVHTHDDRGCGVAAAEMAVMAGADRVEGTLLGNGERTGNMDLVTAGMNLYSQGIDPGIDFSRMKEIVALVEEITDIQTHPRHPYAGDLVFSAFSGSHQDAIRKCLARYQEGDIWTAAYLPIDPADVGRRYEEVVRINSQSGKGGVAHVLERDFGIDLPRWLQQELAGVVQGDAEEDGGEITSERVHRRFNSDYLNVPMGWVLRSYDLNRSNEQVQAQISIGDDRQPVTLLSGRGDGAMSALVDALNRRIGGEVKVVSFDEYSLGDNTEANAMACVRVQVGDSTQSAVAMAVDTTAAALQAILSAVGRMQETSEQLIANS.

The region spanning 30-304 (PLWAAVDLRD…DPGIDFSRMK (275 aa)) is the Pyruvate carboxyltransferase domain. The Mg(2+) site is built by aspartate 39, histidine 243, histidine 245, and asparagine 279. The segment at 436-559 (VPMGWVLRSY…ETSEQLIANS (124 aa)) is regulatory domain.

It belongs to the alpha-IPM synthase/homocitrate synthase family. LeuA type 2 subfamily. In terms of assembly, homodimer. Mg(2+) serves as cofactor.

The protein localises to the cytoplasm. The catalysed reaction is 3-methyl-2-oxobutanoate + acetyl-CoA + H2O = (2S)-2-isopropylmalate + CoA + H(+). Its pathway is amino-acid biosynthesis; L-leucine biosynthesis; L-leucine from 3-methyl-2-oxobutanoate: step 1/4. In terms of biological role, catalyzes the condensation of the acetyl group of acetyl-CoA with 3-methyl-2-oxobutanoate (2-ketoisovalerate) to form 3-carboxy-3-hydroxy-4-methylpentanoate (2-isopropylmalate). The polypeptide is 2-isopropylmalate synthase (Alcanivorax borkumensis (strain ATCC 700651 / DSM 11573 / NCIMB 13689 / SK2)).